A 120-amino-acid chain; its full sequence is SPbeta prophage-derived DSR anti-defense 1 (120 aa).

The protein belongs to the DSR anti-defense 1 family. As to quaternary structure, interacts with Bacillus subtilis DSR2 (via C-terminus) in a 2:4 ratio; this interaction leads to the absence of activation of the NADase defense activity of DSR2.

Counteracts the defense-associated sirtuin 2 (DSR2) defense system of the host. Inhibits the NADase activity of host DSR2 by competing with the tail tube protein that normally activates DSR2. The polypeptide is SPbeta prophage-derived DSR anti-defense 1 (yotI) (Bacillus subtilis (strain 168)).